Consider the following 258-residue polypeptide: Phosphate import ATP-binding protein PstB (258 aa).

The region spanning 12–253 (IQVHNLNFYY…PKMKQTEDYI (242 aa)) is the ABC transporter domain. 44–51 (GPSGCGKS) contacts ATP.

Belongs to the ABC transporter superfamily. Phosphate importer (TC 3.A.1.7) family. In terms of assembly, the complex is composed of two ATP-binding proteins (PstB), two transmembrane proteins (PstC and PstA) and a solute-binding protein (PstS).

It is found in the cell inner membrane. It catalyses the reaction phosphate(out) + ATP + H2O = ADP + 2 phosphate(in) + H(+). Part of the ABC transporter complex PstSACB involved in phosphate import. Responsible for energy coupling to the transport system. The chain is Phosphate import ATP-binding protein PstB from Photorhabdus laumondii subsp. laumondii (strain DSM 15139 / CIP 105565 / TT01) (Photorhabdus luminescens subsp. laumondii).